The primary structure comprises 143 residues: Large ribosomal subunit protein uL13 (143 aa).

It belongs to the universal ribosomal protein uL13 family. As to quaternary structure, part of the 50S ribosomal subunit.

Its function is as follows. This protein is one of the early assembly proteins of the 50S ribosomal subunit, although it is not seen to bind rRNA by itself. It is important during the early stages of 50S assembly. The polypeptide is Large ribosomal subunit protein uL13 (Thermoanaerobacter pseudethanolicus (strain ATCC 33223 / 39E) (Clostridium thermohydrosulfuricum)).